A 276-amino-acid chain; its full sequence is Orotidine 5'-phosphate decarboxylase (276 aa).

Substrate contacts are provided by residues Asp-40, 62–64 (KTH), 93–102 (DRKFIDIGNT), Tyr-228, and Arg-246. The active-site Proton donor is Lys-95.

Belongs to the OMP decarboxylase family.

It catalyses the reaction orotidine 5'-phosphate + H(+) = UMP + CO2. It functions in the pathway pyrimidine metabolism; UMP biosynthesis via de novo pathway; UMP from orotate: step 2/2. The protein is Orotidine 5'-phosphate decarboxylase (pyrG) of Penicillium nalgiovense.